A 385-amino-acid polypeptide reads, in one-letter code: Queuine tRNA-ribosyltransferase (385 aa).

Aspartate 92 (proton acceptor) is an active-site residue. Substrate is bound by residues 92–96 (DSGGF), aspartate 146, glutamine 188, and glycine 215. Positions 246–252 (GVGHPED) are RNA binding. The active-site Nucleophile is the aspartate 265. The segment at 270-274 (TRTGR) is RNA binding; important for wobble base 34 recognition. Zn(2+)-binding residues include cysteine 303, cysteine 305, cysteine 308, and histidine 334.

It belongs to the queuine tRNA-ribosyltransferase family. In terms of assembly, homodimer. Within each dimer, one monomer is responsible for RNA recognition and catalysis, while the other monomer binds to the replacement base PreQ1. It depends on Zn(2+) as a cofactor.

It carries out the reaction 7-aminomethyl-7-carbaguanine + guanosine(34) in tRNA = 7-aminomethyl-7-carbaguanosine(34) in tRNA + guanine. It functions in the pathway tRNA modification; tRNA-queuosine biosynthesis. Its function is as follows. Catalyzes the base-exchange of a guanine (G) residue with the queuine precursor 7-aminomethyl-7-deazaguanine (PreQ1) at position 34 (anticodon wobble position) in tRNAs with GU(N) anticodons (tRNA-Asp, -Asn, -His and -Tyr). Catalysis occurs through a double-displacement mechanism. The nucleophile active site attacks the C1' of nucleotide 34 to detach the guanine base from the RNA, forming a covalent enzyme-RNA intermediate. The proton acceptor active site deprotonates the incoming PreQ1, allowing a nucleophilic attack on the C1' of the ribose to form the product. After dissociation, two additional enzymatic reactions on the tRNA convert PreQ1 to queuine (Q), resulting in the hypermodified nucleoside queuosine (7-(((4,5-cis-dihydroxy-2-cyclopenten-1-yl)amino)methyl)-7-deazaguanosine). This is Queuine tRNA-ribosyltransferase from Thermus thermophilus (strain ATCC BAA-163 / DSM 7039 / HB27).